We begin with the raw amino-acid sequence, 456 residues long: Exodeoxyribonuclease 7 large subunit (456 aa).

This sequence belongs to the XseA family. In terms of assembly, heterooligomer composed of large and small subunits.

The protein resides in the cytoplasm. It catalyses the reaction Exonucleolytic cleavage in either 5'- to 3'- or 3'- to 5'-direction to yield nucleoside 5'-phosphates.. Bidirectionally degrades single-stranded DNA into large acid-insoluble oligonucleotides, which are then degraded further into small acid-soluble oligonucleotides. This Shigella boydii serotype 18 (strain CDC 3083-94 / BS512) protein is Exodeoxyribonuclease 7 large subunit.